We begin with the raw amino-acid sequence, 371 residues long: Epoxyqueuosine reductase (371 aa).

The active-site Proton donor is the D137. A 4Fe-4S ferredoxin-type domain is found at 179–211 (IPLPVDTPVENQCGKCTACISSCPTNAILENGV). 8 residues coordinate [4Fe-4S] cluster: C191, C194, C197, C201, C217, C244, C247, and C251.

It belongs to the QueG family. In terms of assembly, monomer. Cob(II)alamin serves as cofactor. Requires [4Fe-4S] cluster as cofactor.

It is found in the cytoplasm. The catalysed reaction is epoxyqueuosine(34) in tRNA + AH2 = queuosine(34) in tRNA + A + H2O. It functions in the pathway tRNA modification; tRNA-queuosine biosynthesis. Catalyzes the conversion of epoxyqueuosine (oQ) to queuosine (Q), which is a hypermodified base found in the wobble positions of tRNA(Asp), tRNA(Asn), tRNA(His) and tRNA(Tyr). This Aliivibrio fischeri (strain ATCC 700601 / ES114) (Vibrio fischeri) protein is Epoxyqueuosine reductase.